An 805-amino-acid chain; its full sequence is Leucine--tRNA ligase (805 aa).

Residues 40–51 (PYPSGQGLHVGH) carry the 'HIGH' region motif. The 'KMSKS' region signature appears at 577–581 (KMSKS). Position 580 (Lys-580) interacts with ATP.

Belongs to the class-I aminoacyl-tRNA synthetase family.

The protein localises to the cytoplasm. The enzyme catalyses tRNA(Leu) + L-leucine + ATP = L-leucyl-tRNA(Leu) + AMP + diphosphate. In Pediococcus pentosaceus (strain ATCC 25745 / CCUG 21536 / LMG 10740 / 183-1w), this protein is Leucine--tRNA ligase.